A 1413-amino-acid chain; its full sequence is DNA-directed RNA polymerase subunit beta' (1413 aa).

The Zn(2+) site is built by cysteine 72, cysteine 74, cysteine 87, and cysteine 90. Aspartate 463, aspartate 465, and aspartate 467 together coordinate Mg(2+). The Zn(2+) site is built by cysteine 811, cysteine 885, cysteine 892, and cysteine 895.

It belongs to the RNA polymerase beta' chain family. The RNAP catalytic core consists of 2 alpha, 1 beta, 1 beta' and 1 omega subunit. When a sigma factor is associated with the core the holoenzyme is formed, which can initiate transcription. It depends on Mg(2+) as a cofactor. Zn(2+) serves as cofactor.

It carries out the reaction RNA(n) + a ribonucleoside 5'-triphosphate = RNA(n+1) + diphosphate. DNA-dependent RNA polymerase catalyzes the transcription of DNA into RNA using the four ribonucleoside triphosphates as substrates. This is DNA-directed RNA polymerase subunit beta' from Ruegeria pomeroyi (strain ATCC 700808 / DSM 15171 / DSS-3) (Silicibacter pomeroyi).